We begin with the raw amino-acid sequence, 1066 residues long: MLGDGNEGMATIPGFNQIQFEGFCRFIDQGLAEELYKFPKIEDTDQEIEFQLFVETYQLVEPLIKERDAVYELLTYSSELYVSAGLIWKTGRDMQEQTIFIGNIPLMNSLGTFIVNGVYRILINQILQSPGIYYRSELDHNGISVYTGTIISDWGGRSELEIDRKARIWARVSRKQKISILVLSSAMGSNLREILENVCYPEIFLSFLNDKERKKIGSKENAILEFYQQFACVGGDPVFSESLCKELQKKFFQQRCELGRIGRRNMNRRLNLDIPQNNPFLLPRDILAAADHLIGLKFGMGTLDDMNHLKNKRIRSVADLLQDQFGLALVRLENAVRGTICGAIRHKLIPTPQNLVTSTPLTTTYESFFGLHPLSQVLDGTNPLTQIVHGRKLSYLGPGGLTGRTANFRIRDIHPSHYGRICPIDTSEGINVGLIGSLSIHARIGHWGFLESPFYEISERRVLFLLPGRDEYYKVAAGNSLALNQDIQEKQVVPARYRQEFLTIAWEQVHLRSIFPFQYFSIGASLIPFIEHNDANRALMSSNMQRQAVPLSRSEKCIVGTGLEQQAALDSGALSIAEREGKVLYTDTDKILLSGNGGTLSIPLVMYQRSNKNTCMHQKPRVQRGKCIKKGQILADAAATVGGELSLGKNVLVAYMPWEGYNFEDAVLISERLVYEDIYTSFHIRKYEIQTHVTSQGPERVTNEIPHLEAHLLRNLDKSGIVMLGSWVETGDILVGKLTPQMVKESSYAPEDRLLRAILGIQVSTSKETCLKLPIGGRGRVIDVRWIQKKGGSSYNPEMIRVYISQKREIKVGDKVAGRHGNKGIISKILTRQDMPYLQDGRPVDMVFNPLGVPSRMNVGQIFECSLGLAGSLLDRHYRIAPFDERYEQEASRKLVFSELYQASKQTANPWVFEAEYPGKSRIFDGRTGNPFEQPVLIGKPYILKLIHQVDDKIHGRSSGHYALVTQQPLRGRAKQGGQRVGEMEVWALEGFGVAHILQEMLTYKSDHIRARQEVLGTTIVGGTIPNPEDAPESFRLLVRELRSLALELKHFLISEKNFRIHRKEA.

Belongs to the RNA polymerase beta chain family. As to quaternary structure, in plastids the minimal PEP RNA polymerase catalytic core is composed of four subunits: alpha, beta, beta', and beta''. When a (nuclear-encoded) sigma factor is associated with the core the holoenzyme is formed, which can initiate transcription.

The protein localises to the plastid. It is found in the chloroplast. It carries out the reaction RNA(n) + a ribonucleoside 5'-triphosphate = RNA(n+1) + diphosphate. In terms of biological role, DNA-dependent RNA polymerase catalyzes the transcription of DNA into RNA using the four ribonucleoside triphosphates as substrates. This is DNA-directed RNA polymerase subunit beta from Coffea arabica (Arabian coffee).